A 123-amino-acid chain; its full sequence is Cliotide T4 (123 aa).

The first 28 residues, 1–28, serve as a signal peptide directing secretion; the sequence is MASLRIAPLALFFFLAASVMFTVEKTEA. The segment at residues 29 to 58 is a cross-link (cyclopeptide (Gly-Asn)); that stretch reads GIPCGESCVFIPCITAAIGCSCKSKVCYRN. 3 disulfides stabilise this stretch: Cys-32–Cys-48, Cys-36–Cys-50, and Cys-41–Cys-55. Residues 59-123 constitute a propeptide, removed in mature form; sequence HVIAAEAKTM…KDHLKMSITN (65 aa).

Contains 3 disulfide bonds. In terms of processing, this is a cyclic peptide. In terms of tissue distribution, expressed in flower, stem, shoot, root, leaf, seed, pod and nodule (at protein level).

Its function is as follows. Probably participates in a plant defense mechanism. Active against Gram-negative bacteria E.coli ATCC 700926 (MIC=1.0 uM), K.pneumoniae ATTC 13883 (MIC=5.5 uM) and P.aeruginosa ATCC 39018 (MIC=7.5 uM). Has hemolytic and cytotoxic activity. The chain is Cliotide T4 from Clitoria ternatea (Butterfly pea).